A 118-amino-acid polypeptide reads, in one-letter code: Large ribosomal subunit protein bL19 (118 aa).

This sequence belongs to the bacterial ribosomal protein bL19 family.

Its function is as follows. This protein is located at the 30S-50S ribosomal subunit interface and may play a role in the structure and function of the aminoacyl-tRNA binding site. The sequence is that of Large ribosomal subunit protein bL19 from Helicobacter pylori (strain P12).